The primary structure comprises 127 residues: EECEREKPPEGLAMDFIKRQFEIGEPEKDLCLIAQGLVCMGPATTSICGAQCPKVGIPCQGCYGPTKAVEDQGAKMISAIASDFGVEKDKTVDPEKVAEQLDDIVGTFYTYTLPASLIPMRVHKGGK.

It belongs to the [NiFe]/[NiFeSe] hydrogenase small subunit family. As to quaternary structure, the F420-non-reducing hydrogenase is composed of three subunits; MvhA, MvhD and MvhG. It forms a complex with the heterodisulfide reductase (hdr).

In terms of biological role, part of a complex that provides reducing equivalents for heterodisulfide reductase. This Methanothermus fervidus protein is F420-non-reducing hydrogenase subunit G (mvhG).